Here is a 263-residue protein sequence, read N- to C-terminus: Granzyme K (263 aa).

Residues 1-21 form the signal peptide; the sequence is MRFSSWALVSLVAGVYMSSEC. Residues 22–25 constitute a propeptide, activation peptide; the sequence is FHTE. In terms of domain architecture, Peptidase S1 spans 26-258; sequence IIGGREVQPH…YQTWIKSKLA (233 aa). The cysteines at positions 51 and 67 are disulfide-linked. Residues His66 and Asp115 each act as charge relay system in the active site. 3 cysteine pairs are disulfide-bonded: Cys148-Cys219, Cys180-Cys198, and Cys209-Cys233. Ser213 (charge relay system) is an active-site residue.

Belongs to the peptidase S1 family. Granzyme subfamily.

Its subcellular location is the cytoplasmic granule. This is Granzyme K (Gzmk) from Mus musculus (Mouse).